The following is a 1064-amino-acid chain: Lethal(2) giant larvae protein homolog 1 (1064 aa).

WD repeat units lie at residues S38–L71, V78–F119, V139–L176, S200–F234, L240–P272, A290–V332, I340–L374, T396–S474, Q518–V593, T602–S663, V723–Q783, A792–K844, L849–S902, and V916–A939. A Phosphoserine modification is found at S663. A Phosphothreonine modification is found at T958. The tract at residues E966 to P1010 is disordered. S967 and S985 each carry phosphoserine.

Belongs to the WD repeat L(2)GL family. In terms of assembly, associated with nonmuscle myosin II heavy chain. Interacts with PRKCI/aPKC, PARD6B/Par-6 and PARD6A. Interacts with STX4A. Interacts with RAB10 (GDP-bound form); the interaction is direct and promotes RAB10 association with membranes and activation through competition with the Rab inhibitor GDI1. Interacts with DCAF1. In terms of processing, phosphorylated at least at Ser-663 by PRKCI. In terms of tissue distribution, expressed in brain, kidney, and muscle but is barely seen in heart and placenta. Down-regulated or lost in all cell lines and in most of the tumor samples analyzed. Loss was associated with advanced stage of the disease.

It localises to the early endosome membrane. Its subcellular location is the golgi apparatus. It is found in the trans-Golgi network membrane. The protein resides in the golgi apparatus membrane. The protein localises to the cell projection. It localises to the axon. Its subcellular location is the cytoplasm. It is found in the cytoskeleton. Functionally, cortical cytoskeleton protein found in a complex involved in maintaining cell polarity and epithelial integrity. Involved in the regulation of mitotic spindle orientation, proliferation, differentiation and tissue organization of neuroepithelial cells. Involved in axonogenesis through RAB10 activation thereby regulating vesicular membrane trafficking toward the axonal plasma membrane. This Homo sapiens (Human) protein is Lethal(2) giant larvae protein homolog 1 (LLGL1).